A 271-amino-acid chain; its full sequence is Transcription factor PU.1 (271 aa).

The tract at residues 124-164 (LSPAHQQSSDEEEGERQSPPLEVSDGEADGLEPGPGLLHGE) is disordered. Serine 141 and serine 147 each carry phosphoserine. Residues 154-164 (LEPGPGLLHGE) are compositionally biased toward low complexity. The ETS DNA-binding region spans 171–254 (IRLYQFLLDL…VKKKLTYQFS (84 aa)). Residues lysine 218, arginine 231, arginine 234, and lysine 244 each contribute to the DNA site.

The protein belongs to the ETS family. In terms of assembly, binds DNA as a monomer. Can form homomers. Directly interacts with CEBPD/NF-IL6-beta; this interaction does not affect DNA-binding properties of each partner. Interacts with NONO/p54(nrb). Interacts with RUNX1/AML1. Interacts with GFI1; the interaction represses SPI1 transcriptional activity, hence blocks SPI1-induced macrophage differentiation of myeloid progenitor cells. Interacts with CEBPE. Interacts with IRF4/Pip and IRF8. Interacts with JUN. Interacts with RB1. Interacts with TBP.

It is found in the nucleus. Transcriptional activity at macrophage-specific genes is inhibited by interaction with GFI1, which results in the inhibition of SPI1-induced macrophage differentiation of myeloid progenitor cells, but not that of the granulocyte lineage. In terms of biological role, pioneer transcription factor, which controls hematopoietic cell fate by decompacting stem cell heterochromatin and allowing other transcription factors to enter otherwise inaccessible genomic sites. Once in open chromatin, can directly control gene expression by binding genetic regulatory elements and can also more broadly influence transcription by recruiting transcription factors, such as interferon regulatory factors (IRFs), to otherwise inaccessible genomic regions. Transcriptionally activates genes important for myeloid and lymphoid lineages, such as CSF1R or FCER1A. Transcriptional activation from certain promoters, possibly containing low affinity binding sites, is achieved cooperatively with other transcription factors. FCER1A transactivation is achieved in cooperation with GATA1. May be particularly important for the pro- to pre-B cell transition. Binds (via the ETS domain) onto the purine-rich DNA core sequence 5'-GAGGAA-3', also known as the PU-box. In vitro can bind RNA and interfere with pre-mRNA splicing. This chain is Transcription factor PU.1 (Spi1), found in Rattus norvegicus (Rat).